The sequence spans 217 residues: Transmembrane protein 253 (217 aa).

The next 4 helical transmembrane spans lie at leucine 33–valine 53, methionine 62–leucine 82, methionine 96–methionine 116, and leucine 138–leucine 158. Positions proline 187–proline 217 are disordered.

It is found in the membrane. The protein is Transmembrane protein 253 (TMEM253) of Homo sapiens (Human).